Consider the following 372-residue polypeptide: Putative glutamate--cysteine ligase 2 (372 aa).

This sequence belongs to the glutamate--cysteine ligase type 2 family. YbdK subfamily.

The enzyme catalyses L-cysteine + L-glutamate + ATP = gamma-L-glutamyl-L-cysteine + ADP + phosphate + H(+). Functionally, ATP-dependent carboxylate-amine ligase which exhibits weak glutamate--cysteine ligase activity. The sequence is that of Putative glutamate--cysteine ligase 2 from Gloeobacter violaceus (strain ATCC 29082 / PCC 7421).